The sequence spans 506 residues: Aldehyde dehydrogenase (506 aa).

240–245 (GSTEIG) contributes to the NAD(+) binding site. Active-site residues include Glu262 and Cys301.

It belongs to the aldehyde dehydrogenase family.

It catalyses the reaction an aldehyde + NAD(+) + H2O = a carboxylate + NADH + 2 H(+). The protein operates within alcohol metabolism; ethanol degradation; acetate from ethanol: step 2/2. Its function is as follows. May be involved in V.cholerae virulence, as its expression is under the control of ToxR, a transcriptional activator of several genes associated with virulence. The chain is Aldehyde dehydrogenase (aldA) from Vibrio cholerae serotype O1 (strain ATCC 39541 / Classical Ogawa 395 / O395).